The following is a 107-amino-acid chain: Iron-sulfur cluster assembly protein CyaY (107 aa).

The protein belongs to the frataxin family.

In terms of biological role, involved in iron-sulfur (Fe-S) cluster assembly. May act as a regulator of Fe-S biogenesis. In Neisseria meningitidis serogroup C / serotype 2a (strain ATCC 700532 / DSM 15464 / FAM18), this protein is Iron-sulfur cluster assembly protein CyaY.